We begin with the raw amino-acid sequence, 284 residues long: Bifunctional protein FolD (284 aa).

Residues 164 to 166 (GRS) and Ser189 contribute to the NADP(+) site.

Belongs to the tetrahydrofolate dehydrogenase/cyclohydrolase family. In terms of assembly, homodimer.

The catalysed reaction is (6R)-5,10-methylene-5,6,7,8-tetrahydrofolate + NADP(+) = (6R)-5,10-methenyltetrahydrofolate + NADPH. It carries out the reaction (6R)-5,10-methenyltetrahydrofolate + H2O = (6R)-10-formyltetrahydrofolate + H(+). Its pathway is one-carbon metabolism; tetrahydrofolate interconversion. Catalyzes the oxidation of 5,10-methylenetetrahydrofolate to 5,10-methenyltetrahydrofolate and then the hydrolysis of 5,10-methenyltetrahydrofolate to 10-formyltetrahydrofolate. This chain is Bifunctional protein FolD, found in Listeria welshimeri serovar 6b (strain ATCC 35897 / DSM 20650 / CCUG 15529 / CIP 8149 / NCTC 11857 / SLCC 5334 / V8).